The following is a 376-amino-acid chain: MHFSDTHIGYRSLTLDEREQDFYDAFHEAIDIALENSVDFVIHTGDLFDTWVPGNRAIREFRNAVMKLNARNIPIFVIFGDHDRPRRNGEPAAGIFDFMGVHVLGWDAYEYAVRKFDGEDVLIGGISNMKGYMKTRLKDEYKRSENIEEGYRNRILMSHQAIDPFFVPDQCEAKMDDLPMNFSYIAMGHLHDFMERRIGPLISYAGSTEIKSENEINGYLKQGKGVNIVDISNGEVDLQRIRLKSVRPQIRVESDADNYVHEISEKLSSLRVKDNEKKPLVGLEIHGDISMETVMQDISKFDNAIFSRPKIRKDPKIPNIHTETADLREYFRAYLGDERLADLAMKIMAHSRSKDIDGIMKEIEVLYGDNRQDSPD.

4 residues coordinate Mn(2+): D5, H7, D46, and D81. H82 acts as the Proton donor in catalysis. Mn(2+) is bound by residues H159, H189, and H191.

It belongs to the MRE11/RAD32 family. In terms of assembly, homodimer. Forms a heterotetramer composed of two Mre11 subunits and two Rad50 subunits. Mn(2+) serves as cofactor.

Its activity is regulated as follows. Nuclease activity is regulated by Rad50. Functionally, part of the Rad50/Mre11 complex, which is involved in the early steps of DNA double-strand break (DSB) repair. The complex may facilitate opening of the processed DNA ends to aid in the recruitment of HerA and NurA. Mre11 binds to DSB ends and has both double-stranded 3'-5' exonuclease activity and single-stranded endonuclease activity. The protein is DNA double-strand break repair protein Mre11 of Thermoplasma acidophilum (strain ATCC 25905 / DSM 1728 / JCM 9062 / NBRC 15155 / AMRC-C165).